A 297-amino-acid polypeptide reads, in one-letter code: tRNA (guanine(37)-N(1))/4-demethylwyosine(37)-methyltransferase Taw22 (297 aa).

Residues Arg-89, Phe-106, and 128 to 129 (EL) each bind S-adenosyl-L-methionine.

Belongs to the class I-like SAM-binding methyltransferase superfamily. TRM5/TYW2 family.

The protein resides in the cytoplasm. It catalyses the reaction guanosine(37) in tRNA + S-adenosyl-L-methionine = N(1)-methylguanosine(37) in tRNA + S-adenosyl-L-homocysteine + H(+). The enzyme catalyses 4-demethylwyosine(37) in tRNA(Phe) + S-adenosyl-L-methionine = isowyosine(37) in tRNA(Phe) + S-adenosyl-L-homocysteine + H(+). In terms of biological role, catalyzes both the N1-methylation of guanosine and the C7-methylation of 4-demethylwyosine (imG-14) at position 37 in tRNA(Phe). The chain is tRNA (guanine(37)-N(1))/4-demethylwyosine(37)-methyltransferase Taw22 from Nanoarchaeum equitans (strain Kin4-M).